Consider the following 641-residue polypeptide: E3 ubiquitin-protein ligase TRIM47 (641 aa).

The segment at 9–58 (CPICLEPLREPVTLPCGHNFCLACLGALWPHRSAGGTGGSGGPARCPLCQ) adopts an RING-type zinc-finger fold. A Phosphothreonine modification is found at Thr-72. The disordered stretch occupies residues 81–123 (QGSVPGPMSAPASGSTRGATPEPSAPSAPPPAPEPSAPCAPEQ). A compositionally biased stretch (pro residues) spans 103–118 (PSAPSAPPPAPEPSAP). A B box-type zinc finger spans residues 181-221 (LEESLCPRHLRPLERYCRVERVCLCEACATQDHRGHELVPL). Residues Cys-186, His-189, Cys-208, and His-213 each contribute to the Zn(2+) site. Residues 305–325 (QGDLRRQEEQRSRLSKARHNL) adopt a coiled-coil conformation. Ser-393 bears the Phosphoserine mark. The segment at 396-416 (DGLQKLGSEDVESQDPDSTSL) is disordered. One can recognise a B30.2/SPRY domain in the interval 413–634 (STSLLESEAP…LQIGPLKKSC (222 aa)). Position 464 is a phosphoserine (Ser-464). The residue at position 585 (Arg-585) is an Omega-N-methylarginine. Position 591 is a phosphoserine (Ser-591).

The protein belongs to the TRIM/RBCC family. As to expression, expressed in hepatocytes, expression is increased in fatty livers.

The protein localises to the cytoplasm. Its subcellular location is the nucleus. It catalyses the reaction S-ubiquitinyl-[E2 ubiquitin-conjugating enzyme]-L-cysteine + [acceptor protein]-L-lysine = [E2 ubiquitin-conjugating enzyme]-L-cysteine + N(6)-ubiquitinyl-[acceptor protein]-L-lysine.. The protein operates within protein modification; protein ubiquitination. Functionally, E3 ubiquitin-protein ligase that mediates the ubiquitination and proteasomal degradation of CYLD. The polypeptide is E3 ubiquitin-protein ligase TRIM47 (Mus musculus (Mouse)).